The primary structure comprises 218 residues: Runt-related transcription factor 2 (218 aa).

The region spanning 67–195 is the Runt domain; the sequence is RGHKFYLEKK…TVDGPREPRR (129 aa). The required for interaction with FOXO1 stretch occupies residues 122–138; sequence VMAGNDENYSAELRNAS. Positions 189–218 are disordered; it reads GPREPRRHRQKLDDSKPSLFSDRLSDLGRI. Residue Lys-204 forms a Glycyl lysine isopeptide (Lys-Gly) (interchain with G-Cter in SUMO2) linkage.

Heterodimer of an alpha and a beta subunit. The alpha subunit binds DNA as a monomer and through the Runt domain. DNA-binding is increased by heterodimerization. Interacts with XRCC6 (Ku70) and XRCC5 (Ku80). Interacts with CCNB1, KAT6A and KAT6B. Interacts with HIVEP3. Interacts with IFI204. Interaction with SATB2; the interaction results in enhanced DNA binding and transactivation by these transcription factors. Binds to HIPK3. Interacts with FOXO1 (via a C-terminal region); the interaction inhibits RUNX2 transcriptional activity towards BGLAP. Interacts with FOXP3. Interacts with TMEM119. Interacts with OLFM2. Interacts with IPO7; the interaction inhibits RUNX2 nuclear translocation in osteoblasts. Phosphorylated; probably by MAP kinases (MAPK). Phosphorylation by HIPK3 is required for the SPEN/MINT and FGF2 transactivation during osteoblastic differentiation.

It is found in the nucleus. Its subcellular location is the cytoplasm. In terms of biological role, transcription factor involved in osteoblastic differentiation and skeletal morphogenesis. Essential for the maturation of osteoblasts and both intramembranous and endochondral ossification. CBF binds to the core site, 5'-PYGPYGGT-3', of a number of enhancers and promoters, including murine leukemia virus, polyomavirus enhancer, T-cell receptor enhancers, osteocalcin, osteopontin, bone sialoprotein, alpha 1(I) collagen, LCK, IL-3 and GM-CSF promoters. Inhibits KAT6B-dependent transcriptional activation. In osteoblasts, supports transcription activation: synergizes with SPEN/MINT to enhance FGFR2-mediated activation of the osteocalcin FGF-responsive element (OCFRE). In Rattus norvegicus (Rat), this protein is Runt-related transcription factor 2 (Runx2).